Reading from the N-terminus, the 346-residue chain is Thioredoxin domain-containing protein R362 (346 aa).

Positions 212-345 (LTNLSNTEAN…IVKFIDETMS (134 aa)) constitute a Thioredoxin domain.

Its subcellular location is the virion. This chain is Thioredoxin domain-containing protein R362, found in Acanthamoeba polyphaga (Amoeba).